The following is a 152-amino-acid chain: Siroheme decarboxylase NirD subunit (152 aa).

Belongs to the Ahb/Nir family. As to quaternary structure, probably forms a complex composed of NirD, NirL, NirG and NirH. All proteins are required for the total conversion of siroheme to didecarboxysiroheme.

The catalysed reaction is siroheme + 2 H(+) = 12,18-didecarboxysiroheme + 2 CO2. The protein operates within porphyrin-containing compound metabolism. Its function is as follows. Involved in heme d1 biosynthesis. Catalyzes the decarboxylation of siroheme into didecarboxysiroheme. This chain is Siroheme decarboxylase NirD subunit, found in Stutzerimonas stutzeri (Pseudomonas stutzeri).